A 115-amino-acid polypeptide reads, in one-letter code: NADH-ubiquinone oxidoreductase chain 3 (115 aa).

A run of 3 helical transmembrane segments spans residues 4–24 (LVTM…AFWL), 55–75 (FFLV…LLPM), and 86–106 (TMTL…AYEW).

The protein belongs to the complex I subunit 3 family. As to quaternary structure, core subunit of respiratory chain NADH dehydrogenase (Complex I) which is composed of 45 different subunits. Interacts with TMEM186. Interacts with TMEM242.

The protein localises to the mitochondrion inner membrane. The enzyme catalyses a ubiquinone + NADH + 5 H(+)(in) = a ubiquinol + NAD(+) + 4 H(+)(out). In terms of biological role, core subunit of the mitochondrial membrane respiratory chain NADH dehydrogenase (Complex I) which catalyzes electron transfer from NADH through the respiratory chain, using ubiquinone as an electron acceptor. Essential for the catalytic activity of complex I. This Nelsonia neotomodon (Diminutive woodrat) protein is NADH-ubiquinone oxidoreductase chain 3.